Here is a 172-residue protein sequence, read N- to C-terminus: Alpha-crystallin A chain (172 aa).

Met-1 carries the N-acetylmethionine modification. The tract at residues 1–63 (MDVTIQHPWF…RTVLDSGISE (63 aa)) is required for complex formation with BFSP1 and BFSP2. Gln-6 bears the Deamidated glutamine; partial mark. At Ser-45 the chain carries Phosphoserine. Gln-50 carries the deamidated glutamine; partial modification. Positions 52–163 (LFRTVLDSGI…HERAIPVARE (112 aa)) constitute a sHSP domain. Position 70 is an N6-acetyllysine (Lys-70). The residue at position 90 (Gln-90) is a Deamidated glutamine; partial. The residue at position 99 (Lys-99) is an N6-acetyllysine. Zn(2+) is bound at residue His-100. Asn-101 carries the post-translational modification Deamidated asparagine; partial. The Zn(2+) site is built by Glu-102 and His-107. A Phosphoserine modification is found at Ser-122. A Deamidated asparagine; partial modification is found at Asn-123. The residue at position 147 (Gln-147) is a Deamidated glutamine; partial. His-154 is a Zn(2+) binding site. O-linked (GlcNAc) serine glycosylation occurs at Ser-168.

This sequence belongs to the small heat shock protein (HSP20) family. As to quaternary structure, heteromer composed of three CRYAA and one CRYAB subunits. Inter-subunit bridging via zinc ions enhances stability, which is crucial as there is no protein turn over in the lens. Can also form homodimers and homotetramers (dimers of dimers) which serve as the building blocks of homooligomers. Within homooligomers, the zinc-binding motif is created from residues of 3 different molecules. His-100 and Glu-102 from one molecule are ligands of the zinc ion, and His-107 and His-154 residues from additional molecules complete the site with tetrahedral coordination geometry. Part of a complex required for lens intermediate filament formation composed of BFSP1, BFSP2 and CRYAA. In terms of processing, acetylation at Lys-70 may increase chaperone activity. Post-translationally, undergoes age-dependent proteolytical cleavage at the C-terminus.

It is found in the cytoplasm. The protein localises to the nucleus. In terms of biological role, contributes to the transparency and refractive index of the lens. Acts as a chaperone, preventing aggregation of various proteins under a wide range of stress conditions. Required for the correct formation of lens intermediate filaments as part of a complex composed of BFSP1, BFSP2 and CRYAA. This Macaca mulatta (Rhesus macaque) protein is Alpha-crystallin A chain (CRYAA).